Consider the following 52-residue polypeptide: Alpha-crystallin B chain (52 aa).

The protein belongs to the small heat shock protein (HSP20) family. Homodimer. Aggregates with homologous proteins, including alpha-A-crystallin and the small heat shock protein HSPB1, to form large heteromeric complexes.

In terms of biological role, may contribute to the transparency and refractive index of the lens. This chain is Alpha-crystallin B chain (CRYAB), found in Turdus merula (Common blackbird).